A 371-amino-acid chain; its full sequence is Ligninase LG5 (371 aa).

An N-terminal signal peptide occupies residues 1-21; the sequence is MAFKKLLAVLTAALSLRAAQG. A propeptide spanning residues 22–27 is cleaved from the precursor; the sequence is AAVEKR. Cystine bridges form between Cys30-Cys42, Cys41-Cys311, Cys61-Cys146, and Cys275-Cys344. His74 serves as the catalytic Proton acceptor. Residues Asp75, Gly92, Asp94, and Ser96 each coordinate Ca(2+). Residue His202 coordinates heme b. Residues Ser203, Asp220, Thr222, Ile225, and Asp227 each contribute to the Ca(2+) site. Asn283 is a glycosylation site (N-linked (GlcNAc...) asparagine). The disordered stretch occupies residues 349-371; that stretch reads FPTLSTLPGPATSVARIPPPPGA.

Belongs to the peroxidase family. Ligninase subfamily. Requires Ca(2+) as cofactor. The cofactor is heme b.

It catalyses the reaction 1-(3,4-dimethoxyphenyl)-2-(2-methoxyphenoxy)propane-1,3-diol + H2O2 = 3,4-dimethoxybenzaldehyde + guaiacol + glycolaldehyde + H2O. The enzyme catalyses 2 (3,4-dimethoxyphenyl)methanol + H2O2 = 2 (3,4-dimethoxyphenyl)methanol radical + 2 H2O. It functions in the pathway secondary metabolite metabolism; lignin degradation. In terms of biological role, depolymerization of lignin. Catalyzes the C(alpha)-C(beta) cleavage of the propyl side chains of lignin. The protein is Ligninase LG5 (GLG5) of Phanerodontia chrysosporium (White-rot fungus).